The chain runs to 745 residues: Aminopeptidase NAALADL1 (745 aa).

At 1-6 (MHWAKI) the chain is on the cytoplasmic side. The helical; Signal-anchor for type II membrane protein transmembrane segment at 7 to 28 (LGVGIGAAALLGLGIILGHFAI) threads the bilayer. Topologically, residues 29-745 (PKATEPLASS…AATLQPVTDL (717 aa)) are extracellular. N-linked (GlcNAc...) asparagine glycans are attached at residues Asn-128, Asn-141, and Asn-235. Residues Thr-263 and Leu-266 each coordinate Ca(2+). Residues Asn-279, Asn-304, and Asn-350 are each glycosylated (N-linked (GlcNAc...) asparagine). The cysteines at positions 301 and 318 are disulfide-linked. 2 residues coordinate Zn(2+): His-373 and Asp-383. The Proton donor/acceptor role is filled by Glu-421. A Zn(2+)-binding site is contributed by Glu-422. Glu-430 and Glu-433 together coordinate Ca(2+). Asp-450 contributes to the Zn(2+) binding site. Asn-456 and Asn-497 each carry an N-linked (GlcNAc...) asparagine glycan. A Zn(2+)-binding site is contributed by His-550. 2 N-linked (GlcNAc...) asparagine glycosylation sites follow: Asn-593 and Asn-620.

This sequence belongs to the peptidase M28 family. M28B subfamily. In terms of assembly, homodimer. The cofactor is Zn(2+). N-glycosylated. Detected on apical villi on the brush border membrane of ileum enterocytes (at protein level). Mainly expressed in the distal small intestine.

Its subcellular location is the apical cell membrane. Its function is as follows. Aminopeptidase with broad substrate specificity. Has lower activity with substrates that have Asp or Glu in the P2' position, or Pro in the P3' position. Lacks activity with substrates that have both Pro in the P3' position and Asp or Glu in the P2' position. Lacks carboxypeptidase activity. Lacks dipeptidyl-peptidase IV type activity. The chain is Aminopeptidase NAALADL1 (Naaladl1) from Rattus norvegicus (Rat).